The following is a 284-amino-acid chain: Protein-S-isoprenylcysteine O-methyltransferase (284 aa).

At Met-1–Leu-16 the chain is on the cytoplasmic side. Residues Ser-17–Leu-33 form a helical membrane-spanning segment. Residues Thr-34–Arg-41 lie on the Lumenal side of the membrane. Residues Thr-42–Tyr-59 form a helical membrane-spanning segment. At Arg-60–Arg-69 the chain is on the cytoplasmic side. Residues Ala-70–Gln-87 traverse the membrane as a helical segment. Topologically, residues Ser-88–His-92 are lumenal. The helical transmembrane segment at Phe-93–Ala-112 threads the bilayer. Residues Val-113 to Glu-131 lie on the Cytoplasmic side of the membrane. A helical transmembrane segment spans residues Tyr-132–Phe-149. Residues Trp-150–Lys-154 are Lumenal-facing. The helical transmembrane segment at Gln-155–Arg-174 threads the bilayer. The Cytoplasmic portion of the chain corresponds to Lys-175–Ser-212. S-adenosyl-L-methionine is bound by residues Gln-190, His-197–Val-200, Tyr-205, and His-210–Tyr-213. A helical membrane pass occupies residues Tyr-213–Cys-228. Position 229 (Asn-229) is a topological domain, lumenal. The helical transmembrane segment at Pro-230 to Phe-244 threads the bilayer. At Arg-245–Leu-284 the chain is on the cytoplasmic side. Residue Arg-247 participates in substrate binding. Glu-251 lines the S-adenosyl-L-methionine pocket.

Belongs to the class VI-like SAM-binding methyltransferase superfamily. Isoprenylcysteine carboxyl methyltransferase family.

The protein localises to the endoplasmic reticulum membrane. The catalysed reaction is [protein]-C-terminal S-[(2E,6E)-farnesyl]-L-cysteine + S-adenosyl-L-methionine = [protein]-C-terminal S-[(2E,6E)-farnesyl]-L-cysteine methyl ester + S-adenosyl-L-homocysteine. Functionally, catalyzes the post-translational methylation of isoprenylated C-terminal cysteine residues. This is Protein-S-isoprenylcysteine O-methyltransferase from Rattus norvegicus (Rat).